Consider the following 886-residue polypeptide: Alanine--tRNA ligase (886 aa).

4 residues coordinate Zn(2+): histidine 568, histidine 572, cysteine 670, and histidine 674.

Belongs to the class-II aminoacyl-tRNA synthetase family. It depends on Zn(2+) as a cofactor.

Its subcellular location is the cytoplasm. It catalyses the reaction tRNA(Ala) + L-alanine + ATP = L-alanyl-tRNA(Ala) + AMP + diphosphate. In terms of biological role, catalyzes the attachment of alanine to tRNA(Ala) in a two-step reaction: alanine is first activated by ATP to form Ala-AMP and then transferred to the acceptor end of tRNA(Ala). Also edits incorrectly charged Ser-tRNA(Ala) and Gly-tRNA(Ala) via its editing domain. The polypeptide is Alanine--tRNA ligase (Prochlorococcus marinus (strain NATL2A)).